The following is a 492-amino-acid chain: Fibroblast growth factor receptor substrate 3 (492 aa).

A lipid anchor (N-myristoyl glycine) is attached at Gly2. In terms of domain architecture, IRS-type PTB spans 13–115; the sequence is VPHNHPTKFK…QCNSINVTEE (103 aa). 3 disordered regions span residues 125–205, 337–413, and 425–492; these read PQEL…EDRR, QQLR…EPPR, and WGTA…DLPL. Composition is skewed to polar residues over residues 133-147 and 166-185; these read GSSQPTGYTVSSFSN and PSTSSLRHPSPGEESTQTLI. Residues 374–385 are compositionally biased toward low complexity; that stretch reads TSTRASARSHSS.

In terms of assembly, binds NTRK1, FGFR1, NGFR, GRB2, PTPN11 and ERK2. Post-translationally, phosphorylated on tyrosine residues upon stimulation by BFGF or NGFB.

The protein resides in the membrane. Adapter protein that links FGF and NGF receptors to downstream signaling pathways. Involved in the activation of MAP kinases. Down-regulates ERK2 signaling by interfering with the phosphorylation and nuclear translocation of ERK2. The chain is Fibroblast growth factor receptor substrate 3 (Frs3) from Rattus norvegicus (Rat).